A 66-amino-acid chain; its full sequence is Photosystem II reaction center protein J (66 aa).

Residues 1–27 (MSGKKSGLPDGRVPDRNPDGTPAVPWK) form a disordered region. A helical transmembrane segment spans residues 37-57 (LWLVATAGGMAVMFVVGLFFY).

It belongs to the PsbJ family. As to quaternary structure, PSII is composed of 1 copy each of membrane proteins PsbA, PsbB, PsbC, PsbD, PsbE, PsbF, PsbH, PsbI, PsbJ, PsbK, PsbL, PsbM, PsbT, PsbX, PsbY, PsbZ, Psb30/Ycf12, peripheral proteins PsbO, CyanoQ (PsbQ), PsbU, PsbV and a large number of cofactors. It forms dimeric complexes.

The protein localises to the cellular thylakoid membrane. Its function is as follows. One of the components of the core complex of photosystem II (PSII). PSII is a light-driven water:plastoquinone oxidoreductase that uses light energy to abstract electrons from H(2)O, generating O(2) and a proton gradient subsequently used for ATP formation. It consists of a core antenna complex that captures photons, and an electron transfer chain that converts photonic excitation into a charge separation. This is Photosystem II reaction center protein J from Synechococcus sp. (strain RCC307).